A 369-amino-acid chain; its full sequence is Ubiquinone biosynthesis protein COQ4, mitochondrial (369 aa).

The N-terminal 28 residues, 1-28 (MTSILGSARPLIQVGPKSRNASTSMSRL), are a transit peptide targeting the mitochondrion. The disordered stretch occupies residues 1-70 (MTSILGSARP…NPTNASRHPR (70 aa)). 2 stretches are compositionally biased toward polar residues: residues 19–33 (RNASTSMSRLPSFPT) and 47–66 (YATISPTAPRSSQRNPTNAS). Zn(2+) is bound by residues histidine 198, aspartate 199, histidine 202, and glutamate 214. The interval 330–369 (FSGRAKKGGKRRGWPSKILEHQKAQHQQQQQQQKVDESRN) is disordered. Positions 332-343 (GRAKKGGKRRGW) are enriched in basic residues.

This sequence belongs to the COQ4 family. In terms of assembly, component of a multi-subunit COQ enzyme complex, composed of at least COQ3, COQ4, COQ5, COQ6, COQ7 and COQ9. Requires Zn(2+) as cofactor.

The protein localises to the mitochondrion inner membrane. It catalyses the reaction a 4-hydroxy-3-methoxy-5-(all-trans-polyprenyl)benzoate + H(+) = a 2-methoxy-6-(all-trans-polyprenyl)phenol + CO2. It functions in the pathway cofactor biosynthesis; ubiquinone biosynthesis. In terms of biological role, lyase that catalyzes the C1-decarboxylation of 4-hydroxy-3-methoxy-5-(all-trans-polyprenyl)benzoic acid into 2-methoxy-6-(all-trans-polyprenyl)phenol during ubiquinone biosynthesis. The sequence is that of Ubiquinone biosynthesis protein COQ4, mitochondrial from Mycosarcoma maydis (Corn smut fungus).